Here is a 392-residue protein sequence, read N- to C-terminus: Olfactomedin-like protein 3 (392 aa).

The first 21 residues, 1 to 21 (MGPWRCLLLLPLLAAAPRAQQ), serve as a signal peptide directing secretion. Residues 25 to 99 (MEYVERRLAL…REVDYLETQN (75 aa)) adopt a coiled-coil conformation. The region spanning 132–388 (DCSDTIASVR…QIIYRMEMKK (257 aa)) is the Olfactomedin-like domain. The cysteines at positions 133 and 315 are disulfide-linked. Residues Asn175 and Asn235 are each glycosylated (N-linked (GlcNAc...) asparagine).

The protein belongs to the OLFML3 family.

The protein resides in the secreted. In terms of biological role, secreted scaffold protein that plays an essential role in dorsoventral patterning during early development. Stabilizes axial formation by restricting chordin (CHRD) activity on the dorsal side. Acts by facilitating the association between the tolloid proteases and their substrate chordin (CHRD), leading to enhance chordin (CHRD) degradation. This Gallus gallus (Chicken) protein is Olfactomedin-like protein 3 (OLFML3).